A 546-amino-acid polypeptide reads, in one-letter code: MAAKDVKFNTEARNKMLKGVNILADAVKVTLGPKGRNVVLDKSFGAPRITKDGVSVAKEIELEDKFENMGAQMVKEVASRTNDEAGDGTTTATVLAQAIVREGMKSVAAGMNPMDLKRGIDLATAKVVEAIKAASRPVNDSAEVAQVGTISANGESEIGRQIAEAMQKVGNEGVITVEENKGLETETDVVEGMQFDRGYLSPYFVTNADKMIAELEDCMILLHEKKLSSLQPMVPLLEQVIQSQKPLLIIAEDVEGEALATLVVNKLRGGLKIAAVKAPGFGDRRKAMLQDIAILTGGQVISEDLGMKLESVTMDMLGTAKKISITKDETTIVDGAGEKAEIEARVAQIRTQIEETTSDYDREKLQERVAKLAGGVAVIRVGGMTEVEVKERKDRVDDALNATRAAVQEGVVVGGGVALVQAGKVLADLEGANADQTAGINIVRKAIEAPLRQIAENAGVDGAVVAGKVRESGDASFGFNAQTEEYGDMFKFGVIDPAKVVRTALEDASSVAGLLITTEAMVADKPQKDAPAGGGMPDMGGMGGMM.

Residues 30 to 33 (TLGP), lysine 51, 87 to 91 (DGTTT), glycine 415, and aspartate 496 contribute to the ATP site. The interval 526 to 546 (PQKDAPAGGGMPDMGGMGGMM) is disordered. Residues 532-546 (AGGGMPDMGGMGGMM) show a composition bias toward gly residues.

This sequence belongs to the chaperonin (HSP60) family. As to quaternary structure, forms a cylinder of 14 subunits composed of two heptameric rings stacked back-to-back. Interacts with the co-chaperonin GroES.

The protein resides in the cytoplasm. It carries out the reaction ATP + H2O + a folded polypeptide = ADP + phosphate + an unfolded polypeptide.. Together with its co-chaperonin GroES, plays an essential role in assisting protein folding. The GroEL-GroES system forms a nano-cage that allows encapsulation of the non-native substrate proteins and provides a physical environment optimized to promote and accelerate protein folding. In Ruegeria pomeroyi (strain ATCC 700808 / DSM 15171 / DSS-3) (Silicibacter pomeroyi), this protein is Chaperonin GroEL.